We begin with the raw amino-acid sequence, 373 residues long: Alanine racemase (373 aa).

K37 serves as the catalytic Proton acceptor; specific for D-alanine. N6-(pyridoxal phosphate)lysine is present on K37. Residue R135 coordinates substrate. The Proton acceptor; specific for L-alanine role is filled by Y266. M313 serves as a coordination point for substrate.

It belongs to the alanine racemase family. Pyridoxal 5'-phosphate is required as a cofactor.

It catalyses the reaction L-alanine = D-alanine. It functions in the pathway amino-acid biosynthesis; D-alanine biosynthesis; D-alanine from L-alanine: step 1/1. Its function is as follows. Catalyzes the interconversion of L-alanine and D-alanine. This organism is able to use both L- and D-alanine as a nitrogen source. May also prevent D-alanine from interfering with the use of L-alanine. This Methanococcus maripaludis (strain DSM 14266 / JCM 13030 / NBRC 101832 / S2 / LL) protein is Alanine racemase (alr).